Consider the following 123-residue polypeptide: Small ribosomal subunit protein uS13 (123 aa).

Residues 94-123 (GLPVRGQSTKSNARTRKGPRKTVAGKKSTK) form a disordered region. Residues 106–123 (ARTRKGPRKTVAGKKSTK) are compositionally biased toward basic residues.

It belongs to the universal ribosomal protein uS13 family. Part of the 30S ribosomal subunit. Forms a loose heterodimer with protein S19. Forms two bridges to the 50S subunit in the 70S ribosome.

In terms of biological role, located at the top of the head of the 30S subunit, it contacts several helices of the 16S rRNA. In the 70S ribosome it contacts the 23S rRNA (bridge B1a) and protein L5 of the 50S subunit (bridge B1b), connecting the 2 subunits; these bridges are implicated in subunit movement. Contacts the tRNAs in the A and P-sites. The polypeptide is Small ribosomal subunit protein uS13 (Mycoplasmopsis agalactiae (strain NCTC 10123 / CIP 59.7 / PG2) (Mycoplasma agalactiae)).